The sequence spans 142 residues: Multiprotein-bridging factor 1a (142 aa).

Polar residues predominate over residues G51–T64. A disordered region spans residues G51 to E77. The 55-residue stretch at I87–K141 folds into the HTH cro/C1-type domain. The segment at residues Q98–S117 is a DNA-binding region (H-T-H motif).

This sequence belongs to the MBF1 family. Expressed in leaves, roots, stems, flowers, siliques and shoots. Detected only in anthers and some seeds in siliques.

The protein resides in the nucleus. Its subcellular location is the nucleolus. Transcriptional coactivator that stimulates transcriptional activity by bridging regulatory proteins and TBP, thereby recruiting TBP to promoters occupied by DNA-binding regulators. The polypeptide is Multiprotein-bridging factor 1a (MBF1A) (Arabidopsis thaliana (Mouse-ear cress)).